A 389-amino-acid polypeptide reads, in one-letter code: Na(+)/H(+) antiporter NhaA 1 (389 aa).

11 helical membrane-spanning segments follow: residues A14 to L34, F47 to I67, I87 to F107, G117 to G137, V146 to F166, L171 to A191, L197 to H217, V252 to V272, M280 to F300, I321 to L341, and L356 to S376.

Belongs to the NhaA Na(+)/H(+) (TC 2.A.33) antiporter family.

The protein resides in the cell inner membrane. It catalyses the reaction Na(+)(in) + 2 H(+)(out) = Na(+)(out) + 2 H(+)(in). Na(+)/H(+) antiporter that extrudes sodium in exchange for external protons. This Vibrio vulnificus (strain CMCP6) protein is Na(+)/H(+) antiporter NhaA 1.